The sequence spans 356 residues: MLDIHNPTTDHQDIRDLTIIGGGPTGIFAAFQCGMNNISCRIIESMSQLGGQLAALYPEKHIYDVAGFPEVPAIDLVESLWAQAERYNPDVVLGEAVTKYTKLDDGTFETRTNAGNVYRSRAVLIAAGLGAFEPRKLPQLGNIDHLTGSSVYYAVKSVDNFKGKRVVIVGGGDSALDWTVGLLKNAESVTLVHRAKEFQGHGKTAHEVEQAKADGLIDVHLQTEVASIEESNGALTHVHLRSSNGEEWTVEADRLLILIGFKSNLGPLAGWDLELAENALVVDSHMKTSVDGLYAAGDIAHYPGKLKIIQTGLSEATMAVRHSLSYIKPGEKIRNVFSSVKMAKEKKAAEQEKKAE.

Residues T25, E44, Q52, Y57, V97, F132, D298, and S339 each contribute to the FAD site.

It belongs to the ferredoxin--NADP reductase type 2 family. Homodimer. It depends on FAD as a cofactor.

It catalyses the reaction 2 reduced [2Fe-2S]-[ferredoxin] + NADP(+) + H(+) = 2 oxidized [2Fe-2S]-[ferredoxin] + NADPH. This chain is Ferredoxin--NADP reductase, found in Chlorobaculum parvum (strain DSM 263 / NCIMB 8327) (Chlorobium vibrioforme subsp. thiosulfatophilum).